A 905-amino-acid polypeptide reads, in one-letter code: Stonin-2 (905 aa).

Disordered regions lie at residues 1–121 (MTTL…HQET), 178–205 (EQTSGQASGADSTDNSSSLQEDEEVEME), and 244–263 (LPPVTSPLKPNTPPSASVIP). Low complexity predominate over residues 40–50 (SSSPDQSESSS). Positions 60–73 (SQDHSHSEQDDSSE) are enriched in basic and acidic residues. Positions 85-94 (PGSPEQPPPD) are enriched in pro residues. Positions 178–196 (EQTSGQASGADSTDNSSSL) are enriched in polar residues. Residues 244–256 (LPPVTSPLKPNTP) are compositionally biased toward pro residues. T255 bears the Phosphothreonine mark. S281, S287, and S302 each carry phosphoserine. 2 consecutive short sequence motifs (NPF) follow at residues 313–315 (NPF) and 329–331 (NPF). The SHD domain occupies 427–560 (GWPMMLRIPE…DLPVLSMDLS (134 aa)). The MHD domain maps to 568–878 (EEEITVDVRD…SYQVALGSIW (311 aa)). A Phosphoserine modification is found at S762.

This sequence belongs to the Stoned B family. As to quaternary structure, interacts with the second C2 domain of synaptotagmins SYT1 and SYT2. Interacts with EPS15, EPS15R and ITSN1. Interacts indirectly with the AP-2 adapter complex. Interacts with TOR1A and COPS4; the interaction controls STON2 protein stability. In terms of processing, phosphorylated in vitro by PKD. Neddylated; deneddylated via its interaction with the COP9 signalosome (CSN) complex through TOR1A and COPS4. Post-translationally, ubiquitinated; leading to its degradation. Ubiquitous.

It is found in the cytoplasm. Its subcellular location is the membrane. It localises to the synapse. The protein resides in the synaptosome. Its function is as follows. Adapter protein involved in endocytic machinery. Involved in the synaptic vesicle recycling. May facilitate clathrin-coated vesicle uncoating. The polypeptide is Stonin-2 (STON2) (Homo sapiens (Human)).